A 226-amino-acid polypeptide reads, in one-letter code: MGMGKGYFVTGTDTGVGKTRVTCALLHAFAATGKTVVGMKPVAAGCENGMWPDVELLAAASNISVQREHINPYALVPPIAPHIAADRAGIEIDLEVIRQAHLELKKKADIVIVEGAGGFLVPLNDHEDSVALVQALGLAVLLVVGMRLGCINHALLTAHAVRAAQIPLAGWVANRIDPEMAVFKENVLALEQRLDCPLLGILPYDQNHDARDLSSLLDIARIGMSS.

Residue Thr19 coordinates Mg(2+). The active site involves Lys40. Asp53 and Glu114 together coordinate Mg(2+). Residues Asp53, 114-117 (EGAG), and 174-175 (NR) each bind ATP.

This sequence belongs to the dethiobiotin synthetase family. In terms of assembly, homodimer. Mg(2+) serves as cofactor.

The protein resides in the cytoplasm. The enzyme catalyses (7R,8S)-7,8-diammoniononanoate + CO2 + ATP = (4R,5S)-dethiobiotin + ADP + phosphate + 3 H(+). Its pathway is cofactor biosynthesis; biotin biosynthesis; biotin from 7,8-diaminononanoate: step 1/2. Functionally, catalyzes a mechanistically unusual reaction, the ATP-dependent insertion of CO2 between the N7 and N8 nitrogen atoms of 7,8-diaminopelargonic acid (DAPA, also called 7,8-diammoniononanoate) to form a ureido ring. This chain is ATP-dependent dethiobiotin synthetase BioD, found in Nitrosospira multiformis (strain ATCC 25196 / NCIMB 11849 / C 71).